Here is a 61-residue protein sequence, read N- to C-terminus: Protein YncO (61 aa).

The chain crosses the membrane as a helical span at residues 18–38 (HVFLYVFYIFLFLVLFIMTIY).

Its subcellular location is the cell inner membrane. This Escherichia coli (strain K12) protein is Protein YncO.